The sequence spans 201 residues: Large ribosomal subunit protein uL18 (201 aa).

The protein belongs to the universal ribosomal protein uL18 family. As to quaternary structure, part of the 50S ribosomal subunit. Contacts the 5S and 23S rRNAs.

This is one of the proteins that bind and probably mediate the attachment of the 5S RNA into the large ribosomal subunit, where it forms part of the central protuberance. The polypeptide is Large ribosomal subunit protein uL18 (Thermococcus onnurineus (strain NA1)).